Here is a 242-residue protein sequence, read N- to C-terminus: Small ribosomal subunit protein uS2 (242 aa).

This sequence belongs to the universal ribosomal protein uS2 family.

The protein is Small ribosomal subunit protein uS2 of Mannheimia succiniciproducens (strain KCTC 0769BP / MBEL55E).